We begin with the raw amino-acid sequence, 937 residues long: Lysosomal alpha-glucosidase (937 aa).

The N-terminal stretch at 1–23 (MMRWPPCSRPLLGVCTLLSLALL) is a signal peptide. A propeptide spanning residues 24–60 (GHILLHDLEVVPRELRGFSQDEIHQACQPGASSPECR) is cleaved from the precursor. A P-type domain is found at 68–118 (TQCDLPPNSRFDCAPDKGITPQQCEARGCCYMPAEWPPDAQMGQPWCFFPP). Cystine bridges form between cysteine 70–cysteine 97, cysteine 80–cysteine 96, and cysteine 91–cysteine 114. N-linked (GlcNAc...) asparagine glycosylation is found at asparagine 127, asparagine 220, asparagine 259, and asparagine 377. Position 391 (aspartate 391) interacts with substrate. An N-linked (GlcNAc...) asparagine glycan is attached at asparagine 457. The active-site Nucleophile is the aspartate 505. Residue glutamate 508 is part of the active site. Cysteines 520 and 545 form a disulfide. Substrate-binding residues include arginine 587 and aspartate 603. A disulfide bond links cysteine 634 and cysteine 645. An N-linked (GlcNAc...) asparagine glycan is attached at asparagine 639. Histidine 661 is a substrate binding site. 3 N-linked (GlcNAc...) asparagine glycosylation sites follow: asparagine 867, asparagine 888, and asparagine 910.

Belongs to the glycosyl hydrolase 31 family.

The protein resides in the lysosome. The protein localises to the lysosome membrane. It catalyses the reaction Hydrolysis of terminal, non-reducing (1-&gt;4)-linked alpha-D-glucose residues with release of alpha-D-glucose.. Essential for the degradation of glycogen in lysosomes. Has highest activity on alpha-1,4-linked glycosidic linkages, but can also hydrolyze alpha-1,6-linked glucans. The sequence is that of Lysosomal alpha-glucosidase (GAA) from Bos taurus (Bovine).